The sequence spans 794 residues: Elongator complex protein 2 (794 aa).

13 WD repeats span residues 55-93 (EHTKRVNTVRWLDCDKLLSGGDDAIAILWELDETGTTKS), 98-140 (GHTS…YVCF), 147-188 (DGFC…AGEG), 203-244 (GHED…KEQM), 286-328 (GHEG…IWLE), 337-376 (GNSVGFYGGKFSGDGHSIMAHSYQGGFHIWSQDPDRPQLW), 384-423 (GHYGEVRDLAWEHSGAYLMTASADQTTRLHAPWLQDGANP), 433-472 (IHGYDMQALALLSRYKFASGAEEKIVRTFQAPANFIENFR), 557-601 (GHGY…QIQK), 604-643 (GHQLTVTQLSFSPDSRYLLSVSRDRRWCLYERQDSSVSYQ), 654-693 (VHTRIIWSCDWSHDGQFFVTSSRDGKVVVWKKEEDCKESS), 705-751 (LKNE…WKLL), and 759-794 (AHHLTVRRLQFRPGKQLQLASCGEDHLVRIYDIKLT).

Belongs to the WD repeat ELP2 family. Component of the elongator complex composed of Elp1, Elp2, Elp3, Elp4, Elp5 and Elp6. The elongator complex associates with and stabilizes microtubules; efficient interaction requires the full complex.

It is found in the cytoplasm. Its subcellular location is the nucleus. The protein resides in the cytoskeleton. It localises to the spindle. Its pathway is tRNA modification; 5-methoxycarbonylmethyl-2-thiouridine-tRNA biosynthesis. Its function is as follows. Component of the elongator complex, which is required for multiple tRNA modifications, including mcm5U (5-methoxycarbonylmethyl uridine), mcm5s2U (5-methoxycarbonylmethyl-2-thiouridine), and ncm5U (5-carbamoylmethyl uridine). The elongator complex catalyzes the formation of carboxymethyluridine in the wobble base at position 34 in tRNAs. Binding by the elongator complex stabilizes microtubules and promotes their growth. This induces central spindle asymmetry, promoting polarized signaling endosome trafficking during asymmetric cell division and cell fate assignation of sensory organ precursor cells. Involved in the regulation of the STAT pathway. This is Elongator complex protein 2 from Drosophila melanogaster (Fruit fly).